A 147-amino-acid chain; its full sequence is UPF0306 protein YhbP (147 aa).

The protein belongs to the UPF0306 family.

This is UPF0306 protein YhbP from Escherichia coli O1:K1 / APEC.